A 378-amino-acid polypeptide reads, in one-letter code: Cobalt-precorrin-5B C(1)-methyltransferase (378 aa).

This sequence belongs to the CbiD family.

It carries out the reaction Co-precorrin-5B + S-adenosyl-L-methionine = Co-precorrin-6A + S-adenosyl-L-homocysteine. It participates in cofactor biosynthesis; adenosylcobalamin biosynthesis; cob(II)yrinate a,c-diamide from sirohydrochlorin (anaerobic route): step 6/10. Catalyzes the methylation of C-1 in cobalt-precorrin-5B to form cobalt-precorrin-6A. The protein is Cobalt-precorrin-5B C(1)-methyltransferase of Methanococcus aeolicus (strain ATCC BAA-1280 / DSM 17508 / OCM 812 / Nankai-3).